The sequence spans 673 residues: UvrABC system protein B (673 aa).

One can recognise a Helicase ATP-binding domain in the interval 26–414; the sequence is EGLEDGLAHQ…GGDVVDQVVR (389 aa). ATP is bound at residue 39 to 46; it reads GVTGSGKT. The Beta-hairpin signature appears at 92 to 115; it reads YYDYYQPEAYVPSSDTFIEKDASV. Positions 431 to 597 constitute a Helicase C-terminal domain; it reads QVDDLLSEIR…GLNKKVVDIL (167 aa). The UVR domain maps to 633-668; the sequence is QQKIHELEGLMMQHAQNLEFEEAAQIRDQLHQLREL.

This sequence belongs to the UvrB family. In terms of assembly, forms a heterotetramer with UvrA during the search for lesions. Interacts with UvrC in an incision complex.

The protein localises to the cytoplasm. Its function is as follows. The UvrABC repair system catalyzes the recognition and processing of DNA lesions. A damage recognition complex composed of 2 UvrA and 2 UvrB subunits scans DNA for abnormalities. Upon binding of the UvrA(2)B(2) complex to a putative damaged site, the DNA wraps around one UvrB monomer. DNA wrap is dependent on ATP binding by UvrB and probably causes local melting of the DNA helix, facilitating insertion of UvrB beta-hairpin between the DNA strands. Then UvrB probes one DNA strand for the presence of a lesion. If a lesion is found the UvrA subunits dissociate and the UvrB-DNA preincision complex is formed. This complex is subsequently bound by UvrC and the second UvrB is released. If no lesion is found, the DNA wraps around the other UvrB subunit that will check the other stand for damage. This is UvrABC system protein B from Shigella flexneri.